A 94-amino-acid chain; its full sequence is Small ribosomal subunit protein bS6 (94 aa).

Belongs to the bacterial ribosomal protein bS6 family.

In terms of biological role, binds together with bS18 to 16S ribosomal RNA. The sequence is that of Small ribosomal subunit protein bS6 from Clostridium botulinum (strain Hall / ATCC 3502 / NCTC 13319 / Type A).